The sequence spans 421 residues: Testin (421 aa).

One can recognise a PET domain in the interval 92-199; that stretch reads MILTNPVAAK…GDVKLPREMD (108 aa). The segment at 133 to 164 is disordered; sequence EKQPVAGSEGAQYRKKQLAKQLPAHDQDPSKC. Residues 155-164 are compositionally biased toward basic and acidic residues; it reads PAHDQDPSKC. LIM zinc-binding domains are found at residues 234 to 297, 299 to 359, and 362 to 421; these read YSCY…CDSE, PRCA…NHAV, and QGCH…KMMS.

It belongs to the prickle / espinas / testin family. As to quaternary structure, interacts via LIM domain 1 with ZYX. Interacts (via LIM domain 3) with ENAH and VASP. Interacts with ALKBH4, talin, actin, alpha-actinin, GRIP1 and PXN. Interacts (via LIM domain 2) with ACTL7A (via N-terminus). Heterodimer with ACTL7A; the heterodimer interacts with ENAH to form a heterotrimer.

Its subcellular location is the cytoplasm. It localises to the cell junction. The protein resides in the focal adhesion. Scaffold protein that may play a role in cell adhesion, cell spreading and in the reorganization of the actin cytoskeleton. Plays a role in the regulation of cell proliferation. May act as a tumor suppressor. In Mustela putorius furo (European domestic ferret), this protein is Testin (TES).